The sequence spans 125 residues: DCPWDWSSHEGHCYKVFKLRKTWEDAEKFCTEQARGGHLISLKSTEEVDFMIKLAYPILKANLVWIGLRDFWRDCHMGWRDHANLLYKAWSDEPNCFVAKTTDNQWFRRKCNISQYFVCQSRVPR.

Intrachain disulfides connect C2–C13, C30–C119, and C96–C111. Residues 9–120 form the C-type lectin domain; it reads HEGHCYKVFK…CNISQYFVCQ (112 aa). A glycan (N-linked (GlcNAc...) asparagine) is linked at N112.

The protein belongs to the snaclec family. Heterodimer; disulfide-linked. Expressed by the venom gland.

The protein localises to the secreted. In terms of biological role, interferes with one step of hemostasis (modulation of platelet aggregation, or coagulation cascade, for example). The protein is Snaclec B7 of Macrovipera lebetinus (Levantine viper).